Consider the following 585-residue polypeptide: Conglutin alpha 3 (585 aa).

Residues M1–G23 form the signal peptide. Intrachain disulfides connect C32-C65 and C108-C406. The Cupin type-1 1 domain maps to L37–H258. 3 disordered regions span residues E113–E147, E199–G240, and K283–E402. Residues E136 to E147 are compositionally biased toward basic and acidic residues. Residues R211 to Q224 show a composition bias toward basic residues. Residues R309–P320 show a composition bias toward acidic residues. Residues E338–R350 show a composition bias toward basic and acidic residues. The region spanning E412–S558 is the Cupin type-1 2 domain. Residues N565–H579 show a composition bias toward polar residues. Residues N565–A585 are disordered.

This sequence belongs to the 11S seed storage protein (globulins) family. In terms of assembly, hexamer; each subunit is composed of an acidic and a basic chain derived from a single precursor and linked by a disulfide bond. Component of globulins complexes which accumulate in seeds.

Functionally, sulfur-rich seed storage protein. This protein found in the seeds of many leguminous and non-leguminous plants is the source of sulfur-containing amino acids in seed meals. This Lupinus angustifolius (Narrow-leaved blue lupine) protein is Conglutin alpha 3.